We begin with the raw amino-acid sequence, 699 residues long: Elongation factor G 1 (699 aa).

Positions E8 to T290 constitute a tr-type G domain. GTP-binding positions include A17–T24, D88–H92, and N142–D145.

This sequence belongs to the TRAFAC class translation factor GTPase superfamily. Classic translation factor GTPase family. EF-G/EF-2 subfamily.

It localises to the cytoplasm. In terms of biological role, catalyzes the GTP-dependent ribosomal translocation step during translation elongation. During this step, the ribosome changes from the pre-translocational (PRE) to the post-translocational (POST) state as the newly formed A-site-bound peptidyl-tRNA and P-site-bound deacylated tRNA move to the P and E sites, respectively. Catalyzes the coordinated movement of the two tRNA molecules, the mRNA and conformational changes in the ribosome. This Hahella chejuensis (strain KCTC 2396) protein is Elongation factor G 1.